We begin with the raw amino-acid sequence, 260 residues long: UPF0246 protein BPSL1241 (260 aa).

It belongs to the UPF0246 family.

The protein is UPF0246 protein BPSL1241 of Burkholderia pseudomallei (strain K96243).